Here is a 1123-residue protein sequence, read N- to C-terminus: Mediator of RNA polymerase II transcription subunit 14 (1123 aa).

The disordered stretch occupies residues 450–484; sequence KQSDASDEQQNNIEPNEESLEDLREDNNEDESEPQ.

It belongs to the Mediator complex subunit 14 family. In terms of assembly, component of the Mediator complex.

Its subcellular location is the nucleus. In terms of biological role, component of the Mediator complex, a coactivator involved in the regulated transcription of nearly all RNA polymerase II-dependent genes. Mediator functions as a bridge to convey information from gene-specific regulatory proteins to the basal RNA polymerase II transcription machinery. Mediator is recruited to promoters by direct interactions with regulatory proteins and serves as a scaffold for the assembly of a functional preinitiation complex with RNA polymerase II and the general transcription factors. The polypeptide is Mediator of RNA polymerase II transcription subunit 14 (RGR1) (Debaryomyces hansenii (strain ATCC 36239 / CBS 767 / BCRC 21394 / JCM 1990 / NBRC 0083 / IGC 2968) (Yeast)).